A 56-amino-acid chain; its full sequence is Small ribosomal subunit protein uS14 (56 aa).

Zn(2+) is bound by residues Cys-21, Cys-24, Cys-39, and Cys-42.

The protein belongs to the universal ribosomal protein uS14 family. It depends on Zn(2+) as a cofactor.

The chain is Small ribosomal subunit protein uS14 (RPS29) from Debaryomyces hansenii (strain ATCC 36239 / CBS 767 / BCRC 21394 / JCM 1990 / NBRC 0083 / IGC 2968) (Yeast).